The primary structure comprises 204 residues: Small ribosomal subunit protein uS4 (204 aa).

Positions 20 to 46 are disordered; sequence WGRPKSPINKREYGPGEHGQRRRKPSD. Residues 28 to 38 are compositionally biased toward basic and acidic residues; that stretch reads NKREYGPGEHG. Residues 93–156 form the S4 RNA-binding domain; it reads TRLDAVVYRM…RQMPLILEAL (64 aa).

It belongs to the universal ribosomal protein uS4 family. Part of the 30S ribosomal subunit. Contacts protein S5. The interaction surface between S4 and S5 is involved in control of translational fidelity.

In terms of biological role, one of the primary rRNA binding proteins, it binds directly to 16S rRNA where it nucleates assembly of the body of the 30S subunit. Functionally, with S5 and S12 plays an important role in translational accuracy. The polypeptide is Small ribosomal subunit protein uS4 (Rhodospirillum rubrum (strain ATCC 11170 / ATH 1.1.1 / DSM 467 / LMG 4362 / NCIMB 8255 / S1)).